A 655-amino-acid polypeptide reads, in one-letter code: Fidgetin-like protein 1 (655 aa).

The tract at residues 289-313 is disordered; that stretch reads QQKKHSNQPQRNPGPLYGGGKKSLG. Residues A385 and 425-430 each bind ATP; that span reads GTGKTL.

The protein belongs to the AAA ATPase family. Hexamer. It depends on Mg(2+) as a cofactor.

It is found in the nucleus. It localises to the cytoplasm. The protein localises to the perinuclear region. The enzyme catalyses ATP + H2O = ADP + phosphate + H(+). In terms of biological role, may be involved in DNA double-strand break (DBS) repair via homologous recombination (HR). May regulate osteoblast proliferation and differentiation. This is Fidgetin-like protein 1 (fignl1) from Xenopus laevis (African clawed frog).